The chain runs to 373 residues: MSEKKINLLDLDRKGLRALFTEMGEKPFRADQLMKWLYHFGVSDFEQMTNINKVLRAKLAARCEVVAPEISSYQKSADGTIKFAINVGNGQEVETVYIPEEDRATLCVSSQVGCALECTFCSTAQQGFNRNLTVSEIVGQIWRVSHFLGFQKETGERPISNVVMMGMGEPLLNLKNVMPAIDIMLDDFGFSLSKRRVTVSTSGVVPALDILGDNLDVALAVSIHAPNDELRDVLVPVNKKYPLQEFLAAIRRYLAKSNANRGRVTLEYVMLDHINDSTDQAHELAELMKDTPCKINLIPFNPYPGSPYGRSSNSRIDRFSKVLMEYGLTVIVRKTRGDDIDAACGQLAGDIRDRTKRLAKKRMQDSQISVTIN.

The active-site Proton acceptor is Glu-94. Residues 100-339 enclose the Radical SAM core domain; sequence EEDRATLCVS…VIVRKTRGDD (240 aa). An intrachain disulfide couples Cys-107 to Cys-344. [4Fe-4S] cluster contacts are provided by Cys-114, Cys-118, and Cys-121. Residues 168–169, Ser-200, 222–224, and Asn-301 contribute to the S-adenosyl-L-methionine site; these read GE and SIH. Cys-344 functions as the S-methylcysteine intermediate in the catalytic mechanism.

This sequence belongs to the radical SAM superfamily. RlmN family. It depends on [4Fe-4S] cluster as a cofactor.

The protein resides in the cytoplasm. It catalyses the reaction adenosine(2503) in 23S rRNA + 2 reduced [2Fe-2S]-[ferredoxin] + 2 S-adenosyl-L-methionine = 2-methyladenosine(2503) in 23S rRNA + 5'-deoxyadenosine + L-methionine + 2 oxidized [2Fe-2S]-[ferredoxin] + S-adenosyl-L-homocysteine. The catalysed reaction is adenosine(37) in tRNA + 2 reduced [2Fe-2S]-[ferredoxin] + 2 S-adenosyl-L-methionine = 2-methyladenosine(37) in tRNA + 5'-deoxyadenosine + L-methionine + 2 oxidized [2Fe-2S]-[ferredoxin] + S-adenosyl-L-homocysteine. Its function is as follows. Specifically methylates position 2 of adenine 2503 in 23S rRNA and position 2 of adenine 37 in tRNAs. m2A2503 modification seems to play a crucial role in the proofreading step occurring at the peptidyl transferase center and thus would serve to optimize ribosomal fidelity. The protein is Dual-specificity RNA methyltransferase RlmN of Shewanella loihica (strain ATCC BAA-1088 / PV-4).